The sequence spans 495 residues: Trimethylamine methyltransferase MttB (495 aa).

O334 is a non-standard amino acid (pyrrolysine).

It belongs to the trimethylamine methyltransferase family. Can form a complex with MttC.

It carries out the reaction Co(I)-[trimethylamine-specific corrinoid protein] + trimethylamine + H(+) = methyl-Co(III)-[trimethylamine-specific corrinoid protein] + dimethylamine. Its pathway is one-carbon metabolism; methanogenesis from trimethylamine. In terms of biological role, catalyzes the transfer of a methyl group from trimethylamine to the corrinoid cofactor of MttC. The protein is Trimethylamine methyltransferase MttB of Methanosarcina barkeri.